Consider the following 545-residue polypeptide: CTP synthase (545 aa).

The segment at 1-266 (MTTRYIFVTG…DDLVVKRFGL (266 aa)) is amidoligase domain. Ser-14 is a binding site for CTP. A UTP-binding site is contributed by Ser-14. ATP is bound by residues 15–20 (SLGKGI) and Asp-72. The Mg(2+) site is built by Asp-72 and Glu-140. CTP contacts are provided by residues 147–149 (DIE), 187–192 (KTKPTQ), and Lys-223. UTP-binding positions include 187–192 (KTKPTQ) and Lys-223. 239 to 241 (KDV) is an ATP binding site. Residues 291-542 (VIGMVGKYIE…IAAASAHQKR (252 aa)) enclose the Glutamine amidotransferase type-1 domain. L-glutamine is bound at residue Gly-352. Cys-379 (nucleophile; for glutamine hydrolysis) is an active-site residue. L-glutamine is bound by residues 380–383 (LGMQ), Glu-403, and Arg-470. Active-site residues include His-515 and Glu-517.

This sequence belongs to the CTP synthase family. Homotetramer.

The enzyme catalyses UTP + L-glutamine + ATP + H2O = CTP + L-glutamate + ADP + phosphate + 2 H(+). It catalyses the reaction L-glutamine + H2O = L-glutamate + NH4(+). The catalysed reaction is UTP + NH4(+) + ATP = CTP + ADP + phosphate + 2 H(+). The protein operates within pyrimidine metabolism; CTP biosynthesis via de novo pathway; CTP from UDP: step 2/2. Allosterically activated by GTP, when glutamine is the substrate; GTP has no effect on the reaction when ammonia is the substrate. The allosteric effector GTP functions by stabilizing the protein conformation that binds the tetrahedral intermediate(s) formed during glutamine hydrolysis. Inhibited by the product CTP, via allosteric rather than competitive inhibition. Functionally, catalyzes the ATP-dependent amination of UTP to CTP with either L-glutamine or ammonia as the source of nitrogen. Regulates intracellular CTP levels through interactions with the four ribonucleotide triphosphates. The protein is CTP synthase of Shewanella putrefaciens (strain CN-32 / ATCC BAA-453).